The chain runs to 70 residues: Large ribosomal subunit protein eL38 (70 aa).

This sequence belongs to the eukaryotic ribosomal protein eL38 family.

The sequence is that of Large ribosomal subunit protein eL38 (RPL38) from Branchiostoma belcheri (Amphioxus).